The primary structure comprises 1641 residues: Histone-lysine N-methyltransferase SETD1 (1641 aa).

The interval 1–23 is disordered; that stretch reads MQDVRNINLVNNSSNSHDSSLAN. The segment covering 8 to 23 has biased composition (low complexity); the sequence is NLVNNSSNSHDSSLAN. The region spanning 101–179 is the RRM domain; that stretch reads VEVTIVNLND…KILDVFCDPF (79 aa). 6 disordered regions span residues 236–384, 537–596, 831–915, 930–949, 1119–1155, and 1205–1226; these read YTTQ…IDQR, APPF…SDEE, RIRK…SSSS, KART…NLNQ, QEKR…RKTA, and NSKG…SSQA. The span at 244–284 shows a compositional bias: basic and acidic residues; that stretch reads IPNRSRDRNWNRDKERERDRHFKERSRHSSERSYDRDRGMR. Basic residues predominate over residues 291 to 300; that stretch reads IRRRRTFYRR. Basic and acidic residues-rich tracts occupy residues 308–341 and 349–384; these read EDSR…ESFR and KGRD…IDQR. The span at 556-568 shows a compositional bias: low complexity; that stretch reads EVFSDVNSDSNNS. 2 stretches are compositionally biased toward basic and acidic residues: residues 569 to 579 and 844 to 867; these read ENKKRSCEKNN and NFLE…KEDS. The segment covering 904–915 has biased composition (low complexity); the sequence is SASSFFSSSSSS. 2 stretches are compositionally biased toward basic and acidic residues: residues 930 to 939 and 1119 to 1128; these read KARTSEEDSP and QEKRIEKSLD. The stretch at 1091 to 1132 forms a coiled coil; the sequence is SEEEKEYQERRKRNTEYMAQMEREFLEEQEKRIEKSLDKNLQ. Polar residues-rich tracts occupy residues 1129–1145 and 1205–1217; these read KNLQ…NSPR and NSKG…QSPV. Residues 1473-1478 carry the RxxxRR motif motif; the sequence is RSNQRR. Residues 1502 to 1619 form the SET domain; the sequence is KQLKFAKSAI…INEEITYDYK (118 aa). An S-adenosyl-L-methionine-binding site is contributed by Tyr1618. A Post-SET domain is found at 1625–1641; that stretch reads EKIPCLCGAQGCRGTLN.

It belongs to the class V-like SAM-binding methyltransferase superfamily. In terms of assembly, component of the Set1C/COMPASS complex, composed at least of the catalytic subunit Set1, wds/WDR5, Wdr82, Rbbp5, ash2, Cfp1/CXXC1, hcf and Dpy-30L1.

The protein resides in the nucleus. It localises to the chromosome. It carries out the reaction L-lysyl(4)-[histone H3] + 3 S-adenosyl-L-methionine = N(6),N(6),N(6)-trimethyl-L-lysyl(4)-[histone H3] + 3 S-adenosyl-L-homocysteine + 3 H(+). The enzyme catalyses N(6)-methyl-L-lysyl(4)-[histone H3] + S-adenosyl-L-methionine = N(6),N(6)-dimethyl-L-lysyl(4)-[histone H3] + S-adenosyl-L-homocysteine + H(+). The catalysed reaction is N(6),N(6)-dimethyl-L-lysyl(4)-[histone H3] + S-adenosyl-L-methionine = N(6),N(6),N(6)-trimethyl-L-lysyl(4)-[histone H3] + S-adenosyl-L-homocysteine + H(+). Its function is as follows. Catalytic component of the COMPASS (Set1C) complex that specifically mono-, di- and trimethylates histone H3 to form H3K4me1/2/3. Binds RNAs which might negatively affect its histone methyltransferase activity. COMPASS recognizes ubiquitinated H2B on one face of the nucleosome which stimulates the methylation of H3 on the opposing face. Set1-dependent trimethylation regulates chromatin changes at active promoters that ensure optimal RNA polymerase II release into productive elongation, thereby contributing to optimal transcription. This Drosophila melanogaster (Fruit fly) protein is Histone-lysine N-methyltransferase SETD1.